The sequence spans 101 residues: Synaptobrevin-B (101 aa).

At 1 to 76 the chain is on the cytoplasmic side; it reads MSNNPNNSGQ…RRQMWCRNMK (76 aa). The region spanning 13-73 is the v-SNARE coiled-coil homology domain; the sequence is KTQSILQEVD…VTIRRQMWCR (61 aa). Residues 77–97 form a helical; Anchor for type IV membrane protein membrane-spanning segment; sequence LQLIIIAVVILVLAVILIPII. Topologically, residues 98-101 are vesicular; sequence MKFV.

The protein belongs to the synaptobrevin family.

It localises to the cytoplasmic vesicle. The protein resides in the secretory vesicle membrane. Functionally, involved in the targeting and/or fusion of transport vesicles to their target membrane. The protein is Synaptobrevin-B (sybB) of Dictyostelium discoideum (Social amoeba).